A 408-amino-acid chain; its full sequence is Ribonuclease T2-like (408 aa).

The N-terminal stretch at 1–25 (MLQSIPGPQHILKALTGSLGLSTIF) is a signal peptide. Intrachain disulfides connect Cys38–Cys56, Cys45–Cys92, Cys55–Cys158, and Cys100–Cys150. Residue His85 is part of the active site. A glycan (N-linked (GlcNAc...) asparagine) is linked at Asn108. Catalysis depends on residues Glu143 and His147. N-linked (GlcNAc...) asparagine glycosylation occurs at Asn173. Cys222 and Cys257 form a disulfide bridge. The tract at residues 268 to 292 (KHREPSRTTDTPSQPTTTGTPFKGR) is disordered. Low complexity predominate over residues 275-288 (TTDTPSQPTTTGTP). N-linked (GlcNAc...) asparagine glycosylation is present at Asn372.

It belongs to the RNase T2 family.

Its subcellular location is the vacuole lumen. The protein resides in the cytoplasm. It carries out the reaction a ribonucleotidyl-ribonucleotide-RNA + H2O = a 3'-end 3'-phospho-ribonucleotide-RNA + a 5'-end dephospho-ribonucleoside-RNA + H(+). Its function is as follows. Rnase which modulates cell survival under stress conditions. Released from the vacuole to the cytoplasm during stress to promote tRNA and rRNA cleavage and to activate separately a downstream pathway that promotes cell death. Involved in cell size, vacuolar morphology and growth at high temperatures and high salt concentration. This is Ribonuclease T2-like (rny1) from Aspergillus fumigatus (strain ATCC MYA-4609 / CBS 101355 / FGSC A1100 / Af293) (Neosartorya fumigata).